The chain runs to 362 residues: Peptide chain release factor 1 (362 aa).

An N5-methylglutamine modification is found at Q232.

The protein belongs to the prokaryotic/mitochondrial release factor family. Methylated by PrmC. Methylation increases the termination efficiency of RF1.

The protein localises to the cytoplasm. Functionally, peptide chain release factor 1 directs the termination of translation in response to the peptide chain termination codons UAG and UAA. This chain is Peptide chain release factor 1, found in Myxococcus xanthus.